We begin with the raw amino-acid sequence, 3931 residues long: MSGILDRCTCTPNARVFVAEGQVYCTRCLSARSLLPLNLQVPELGVLGLFYRPEEPLRWTLPRAFPTVECSPAGACWLSAIFPIARMTSGNLNFQQRMVRVAAEIYRAGQLTPTVLKTLQVYERGCRWYPIVGPVPGVGVYANSLHVSDKPFPGATHVLTNLPLPQRPKPEDFCPFECAMADVYDIGRGAVMYVAGGKVSWAPRGGNEVKFEPIPKELKLVANRLHTSFPPHHVVDMSRFTFMTPGSGVSMRVEYQHGCLPADTVPEGNCWWRLFDSLPPEVQYKEIRHANQFGYQTKHGVPGKYLQRRLQVNGLRAVTDTHGPIVIQYFSVKESWIRHLKLVEEPSLPGFEDLLRIRVEPNTSPLAGKDEKIFRFGSHKWYGAGKRARKPRSGATTMVAHHASSAHETRQATKHEGAGANKAEHLKRYSPPAEGNCGWHCISAIANRMVNSNFETTLPERVRPSDDWATDEDLVNTIQILRLPAALDRNGACGSAKYVLKLEGEHWTVSVIPGMSPTLLPLECVQGCCEHKGGLVSPDAVEISGFDPACLDRLAKVMHLPSSTIPAALAELSDDSNRPVSPAATTWTVSQFYARHRGGDHHDQVCLGKIISLCQVIEDCCCHQNKTNRATPEEVAAKIDQYLRGATSLEECLAKLERVSPPSAADTSFDWNVVLPGVEAANQTTEQPHVNSCCTLVPPVTQEPLGKDSVPLTAFSLSNCYYPAQGDEVHHRERLNSVLSKLEEVVLEEYGLMSTGLGPRPVLPSGLDELKDQMEEDLLKLANTQATSEMMAWAAEQVDLKAWVKSYPRWTPPPPPPRVQPRRTKSVKSLPEGKPVPAPRRKVRSDCGSPVLMGDNVPNGSEETVGGPLNFPTPSEPMTPMSEPVLVPASRRVPKLMTPLSGSAPVPAPRRTVTTTLTHQDEPLDLSASSQTEYEAFPLAPSQNMGILEAGGQEVEEVLSEISDILNDTNPAPVSSSSSLSSVKITRPKYSAQAIIDSGGPCSGHLQKEKEACLSIMREACDASKLGDPATQEWLSRMWDRVDMLTWRNTSAYQAFRILNGRFEFLPKMILETPPPHPCGFVMLPRTPAPSVSAESDLTIGSVATEDVPRILGKIGDTDELLDRGPSAPSKGEPVCDQPAKDPRMSPRESDESMIAPPADTGGVGSFTDLPSSDGVDVDGGGPLRTVKTKAGRLLDQLSCQVFSLVSHLPIFFSHLFKSDSGYSPGDWGFAAFTLFCLFLCYSYPFFGFAPLLGVFSGSSRRVRMGVFGCWLAFAVGLFKPVSDPVGTACEFDSPECRNVLHSFELLKPWDPVRSLVVGPVGLGLAILGRLLGGARYIWHFLLRLGIVADCILAGAYVLSQGRCKKCWGSCVRTAPNEIAFNVFPFTRATRSSLIDLCDRFCAPKGMDPIFLATGWRGCWTGRSPIEQPSEKPIAFAQLDEKRITARTVVAQPYDPNQAVKCLRVLQAGGAMVAEAVPKVVKVSAIPFRAPFFPAGVKVDPECRIVVDPDTFTTALRSGYSTANLVLGTGDFAQLNGLKIRQISKPSGGGPHLIAALHVACSMALHMLAGVYVTAVGSCGTGTNDPWCTNPFAVPGYGPGSLCTSRLCISQHGLTLPLTALVAGFGLQEIALVVLIFVSIGGMAHRLSCKADMLCILLAIASYVWVPLTWLLCVFPCWLRWFSLHPLTILWLVFFLISVNIPSGILAVVLLVSLWLLGRYTNIAGLVTPYDIHHYTSGPRGVAALATAPDGTYLAAVRRAALTGRTMLFTPSQLGSLLEGAFRTQKPSLNTVNVVGSSMGSGGVFTIDGKIKCVTAAHVLTGNSARVSGVGFNQMLDFDVKGDFAIADCPNWQGVAPKAQFCEDGWTGRAYWLTSSGVEPGVIGNGFAFCFTACGDSGSPVITEAGELVGVHTGSNKQGGGIVTRPSGQFCNVKPIKLSELSEFFAGPKVPLGDVKIGSHIIKDTCEVPSDLCALLAAKPELEGGLSTVQLLCVFFLLWRMMGHAWTPLVAVGFFILNEILPAVLVRSVFSFGMFVLSWLTPWSAQVLMIRLLTAALNRNRWSLGFYSLGAVTSFVADLAVTQGHPLQVVMNLSTYAFLPRMMVVTSPVPVIACGVVHLLAIILYLFKYRCLHNVLVGDGVFSSAFFLRYFAEGKLREGVSQSCGMSHESLTGALAMRLTDEDLDFLTKWTDFKCFVSASNMRNAAGQFIEAAYAKALRIELAQLVQVDKVRGTMAKLEAFADTVAPQLSPGDIVVALGHTPVGSIFDLKVGSTKHTLQAIETRVLAGSKMTVARVVDPTPAPPPVPVPIPLPPKVLENGPNAWGDEDRLSKKKRRRMEAVGIFVMDGKKYQKFWDKNSGDVFYEEVHISTDEWECLRTGDPVDFDPETGIQCGHITIEDKVYNVFTSPSGRRFLVPANPENRRAQWEAAKLSVEQALGMMNVDGELTAKELEKLKRIIDKLQGLTKEQCLNCLLAASGLTRCGRGGLVVTETAVKIVKFHNRTFTLGPVNLKVASEVELKDAVEHNQHPVARPVDGGVVLLRSAVPSLIDVLISGADASPKLLARHGPGNTGIDGTLWDFEAEATKEEVALSAQIIQACDIRRGDAPEIGLPYKLYPVRGNPERVKGVLQNTRFGDIPYKTPSDTGSPVHAAACLTPNATPVTDGRSVLATTMPSGFELYVPTIPASVLDYLDSRPDCPKQLTEHGCEDAALRDLSKYDLSTQGFVLPGVLRLVRKYLFAHVGKCPPVHRPSTYPAKNSMAGINGNRFPTKDIQSVPEIDVLCAQAVRENWQTVTPCTLKKQYCGKKKTRTILGTNNFIALAHRAALSGVTQGFMKKAFNSPIALGKNKFKELQAPVLGRCLEADLASCDRSTPAIVRWFAANLLYELACAEEHLPSYVLNCCHDLLVTQSGAVTKRGGLSSGDPITSVSNTIYSLVIYAQHMVLSYFKSGHPHGLLFLQDQLKFEDMLKVQPLIVYSDDLVLYAESPSMPNYHWWVEHLNLMLGFQTDPKKTTITDSPSFLGCRIINGRQLVPNRDRILAALAYHMKASNVSEYYASAAAILMDSCACLEYDPEWFEELVVGIAQCARKDGYSFPGPPFFLSMWEKLRSNHEGKKSRMCGYCGAPAPYATACGLDVCVYHTHFHQHCPVIIWCGHPAGSGSCSECEPPLGKGTSPLDEVLEQVPYKPPRTVIMHVEQGLTPLDPGRYQTRRGLVSVRRGIRGNEVDLPDGDYASTALLPTCKEINMVAVASNVLRSRFIIGPPGAGKTHWLLQQVQDGDVIYTPTHQTMLDMIRALGTCRFNVPAGTTLQFPAPSRTGPWVRILAGGWCPGKNSFLDEAAYCNHLDVLRLLSKTTLTCLGDFKQLHPVGFDSHCYVFDIMPQTQLKTIWRFGQNICDAIQPDYRDKLMSMVNTTRVTYVEKPVRYGQVLTPYHRDREDGAITIDSSQGATFDVVTLHLPTKDSLNRQRALVAITRARHAIFVYDPHRQLQSMFDLPAKGTPVNLAVHRDEQLIVLDRNNREITVAQALGNGDKFRATDKRVVDSLRAICADLEGSSSPLPKVAHNLGFYFSPDLTQFAKLPVELAPHWPVVTTQNNERWPDRLVASLRPIHKYSRACIGAGYMVGPSVFLGTPGVVSYYLTKFVRGEAQVLPETVFSTGRIEVDCREYLDDREREVAESLPHAFIGDVKGTTVGGCHHVTSKYLPRFLPKESVAVVGVSSPGKAAKAVCTLTDVYLPDLEAYLHPETQSRCWKVMLDFKEVRLMVWKDKTAYFQLEGRHFTWYQLASYASYIRVPVNSTVYLDPCMGPALCNRRVVGSTHWGADLAVTPYDYGAKIILSSAYHGEMPPGYKILACAEFSLDDPVRYKHTWGFESDTAYLYEFTGNGEDWEDYNDAFRARQKGKIYKANATSMRFHFPPGPVIEPTLGLN.

The C4-type; atypical zinc finger occupies 8 to 28 (CTCTPNARVFVAEGQVYCTRC). The segment at 69–182 (ECSPAGACWL…FCPFECAMAD (114 aa)) is PCP1-alpha. Residues Cys-76 and His-146 each act as for nsp1-alpha papain-like cysteine proteinase activity in the active site. The interval 199–200 (VS) is important for host EIF2AK2 inhibition. Residues Cys-270 and His-339 each act as for nsp1-beta papain-like cysteine proteinase activity in the active site. The OTU-like stretch occupies residues 426–513 (LKRYSPPAEG…GEHWTVSVIP (88 aa)). One can recognise a Peptidase C33 domain in the interval 428-536 (RYSPPAEGNC…GCCEHKGGLV (109 aa)). Active-site for nsp2 cysteine proteinase activity residues include Cys-437 and His-506. Disordered regions lie at residues 809-868 (RWTP…VGGP) and 1118-1164 (TDEL…TGGV). Pro residues predominate over residues 810–819 (WTPPPPPPRV). Residues 1139-1151 (PAKDPRMSPRESD) show a composition bias toward basic and acidic residues. 3 consecutive transmembrane segments (helical) span residues 1221-1241 (SGYSPGDWGFAAFTLFCLFLC), 1266-1286 (GVFGCWLAFAVGLFKPVSDPV), and 1339-1359 (WHFLLRLGIVADCILAGAYVL). Positions 1236-1359 (FCLFLCYSYP…DCILAGAYVL (124 aa)) are HD1. Positions 1414–1438 (TGWRGCWTGRSPIEQPSEKPIAFAQ) are WCCH. Transmembrane regions (helical) follow at residues 1554–1574 (IAALHVACSMALHMLAGVYVT), 1607–1627 (LCISQHGLTLPLTALVAGFGL), 1629–1649 (EIALVVLIFVSIGGMAHRLSC), 1659–1679 (AIASYVWVPLTWLLCVFPCWL), and 1695–1715 (FLISVNIPSGILAVVLLVSLW). The segment at 1554–1715 (IAALHVACSM…LAVVLLVSLW (162 aa)) is HD2. Catalysis depends on charge relay system; for serine protease nsp4 activity residues His-1818, Asp-1843, and Ser-1897. Transmembrane regions (helical) follow at residues 2006-2026 (WTPLVAVGFFILNEILPAVLV), 2030-2050 (FSFGMFVLSWLTPWSAQVLMI), 2064-2084 (LGFYSLGAVTSFVADLAVTQG), and 2107-2127 (SPVPVIACGVVHLLAIILYLF). The HD3 stretch occupies residues 2006–2127 (WTPLVAVGFF…HLLAIILYLF (122 aa)).

The protein belongs to the arteriviridae polyprotein family. In terms of assembly, nsp1-alpha papain-like: Interacts with host RNF31. As to quaternary structure, interacts with host EIF2AK2; this interaction occurs in host stress granules and leads to EIF2AK2 inhibition. Interacts with host G3BP1; this interaction probably plays a role in Nsp1-beta-mediated inhibition of host EIF2AK2. Interacts with host DDX18; this interaction redistributes host DDX18 to the cytoplasm. In terms of assembly, interacts with host IFITM1. As to quaternary structure, interacts with host DDX5. Interacts with host OTULIN. In terms of assembly, interacts with host LGALS3. Post-translationally, specific enzymatic cleavages in vivo by its own proteases yield mature proteins. Nsp1 is autocleaved into two subunits, Nsp1-alpha and Nsp1-beta. There are two alternative pathways for processing. Either nsp4-5 is cleaved, which represents the major pathway or the nsp5-6 and nsp6-7 are processed, which represents the minor pathway. The major pathway occurs when nsp2 acts as a cofactor for nsp4.

The protein resides in the host nucleus. The protein localises to the host cytoplasm. It localises to the host membrane. Its subcellular location is the host endoplasmic reticulum. It is found in the host perinuclear region. It catalyses the reaction RNA(n) + a ribonucleoside 5'-triphosphate = RNA(n+1) + diphosphate. The enzyme catalyses ATP + H2O = ADP + phosphate + H(+). The catalysed reaction is Thiol-dependent hydrolysis of ester, thioester, amide, peptide and isopeptide bonds formed by the C-terminal Gly of ubiquitin (a 76-residue protein attached to proteins as an intracellular targeting signal).. It carries out the reaction uridylyl-uridylyl-ribonucleotide-RNA = a 3'-end uridylyl-2',3'-cyclophospho-uridine-RNA + a 5'-end dephospho-ribonucleoside-RNA. Its function is as follows. Contains the activities necessary for the transcription of negative stranded RNA, leader RNA, subgenomic mRNAs and progeny virion RNA as well as proteinases responsible for the cleavage of the polyprotein into functional products. Inhibits host IFN-beta production. Plays a role in the degradation of the host transcriptional activator CREBBP protein. The degradation of host CREBBP which is a key component of the IFN enhanceosome is likely responsible for the inhibition of interferon mediated by Nsp1-alpha. Also participates in the inhibition of host NF-kappa-B activation by counteracting LUBAC-dependent induction of NF-kappa-B. Reduces host NEMO ubiquitination by blocking the interaction between the two LUBAC complex components RNF31 and SHARPIN. In terms of biological role, plays a role in blocking host mRNA nuclear export to the cytoplasm and subversion of host protein synthesis. Additionally, inhibits the interferon-activated JAK/STAT signal transduction by mediating the ubiquitination and subsequent proteasomal degradation of host KPNA1. Repurposes the host antiviral stress granules into a proviral platform to counteract the EIF2AK2/PKR restriction, thereby regulating the host inflammatory response. Functionally, multifunctional protein that acts as a viral protease and as a viral antagonist of host immune response. Cleaves the nsp2/nsp3 site in the viral polyprotein. Displays deubiquitinating activity that cleaves both ubiquitinated and ISGylated products and therefore inhibits ubiquitin and ISG15-dependent host innate immunity. Also deubiquinates host NFKBIA, thereby interfering with NFKBIA degradation and impairing subsequent NF-kappa-B activation. Its function is as follows. Plays a role in the inhibition of the immune response by interacting with host IFITM1. This interaction leads to the proteasomal degradation of the IFN-induced antiviral protein IFITM1. Cleaves the majority of cleavage sites present in the C-terminus of the polyprotein. Triggers host apoptosis through caspase-3, -8, and -9 activations. Subverts host innate immune responses through its protease activity. Targets the NF-kappa-B essential modulator NEMO and mediates its cleavage. Blocks host interferon beta induction and downstream signaling by cleaving mitochondrial MAVS, dislodging it from the mitochondria. Impairs host defense by cleaving host mRNA-decapping enzyme DCP1A to attenuate its antiviral activity. In terms of biological role, plays a role in the initial induction of autophagosomes from host endoplasmic reticulum. Functionally, plays a role in the inhibition of host STAT3 signaling pathway by inducing the degradation of STAT3. Its function is as follows. Responsible for replication and transcription of the viral RNA genome. Displays RNA and DNA duplex-unwinding activities with 5' to 3' polarity. In terms of biological role, plays a role in viral transcription/replication and prevents the simultaneous activation of host cell dsRNA sensors, such as MDA5/IFIH1, OAS, PKR and NLRP3 inflammasome. Acts by degrading the 5'-polyuridines generated during replication of the poly(A) region of viral genomic and subgenomic RNAs. Catalyzes a two-step reaction in which a 2'3'-cyclic phosphate (2'3'-cP) is first generated by 2'-O transesterification, which is then hydrolyzed to a 3'-phosphate (3'-P). If not degraded, poly(U) RNA would hybridize with poly(A) RNA tails and activate host dsRNA sensors. Also plays a role in the inhibition of host type I interferon production by recruiting host OTULIN to promote removal of linear ubiquitination targeting host NEMO. The chain is Replicase polyprotein 1ab from Porcine reproductive and respiratory syndrome virus (PRRSV).